Here is a 273-residue protein sequence, read N- to C-terminus: Ethanolamine ammonia-lyase small subunit (273 aa).

Adenosylcob(III)alamin is bound by residues V164, E185, and C214.

Belongs to the EutC family. In terms of assembly, the basic unit is a heterodimer which dimerizes to form tetramers. The heterotetramers trimerize; 6 large subunits form a core ring with 6 small subunits projecting outwards. The cofactor is adenosylcob(III)alamin.

It is found in the bacterial microcompartment. The enzyme catalyses ethanolamine = acetaldehyde + NH4(+). It functions in the pathway amine and polyamine degradation; ethanolamine degradation. In terms of biological role, catalyzes the deamination of various vicinal amino-alcohols to oxo compounds. Allows this organism to utilize ethanolamine as the sole source of nitrogen and carbon in the presence of external vitamin B12. This chain is Ethanolamine ammonia-lyase small subunit, found in Pseudomonas paraeruginosa (strain DSM 24068 / PA7) (Pseudomonas aeruginosa (strain PA7)).